The sequence spans 604 residues: Protein TAX4 (604 aa).

Disordered stretches follow at residues 38–77, 132–249, 267–299, 338–380, and 394–428; these read HPNG…PRSI, SFSN…RQQE, GTLP…QQEN, DETF…KGLK, and PFPH…NEDK. Residues 176–185 show a composition bias toward polar residues; sequence YDNNVRSRSI. 2 stretches are compositionally biased toward low complexity: residues 186–203 and 224–240; these read SPQV…SISS and SMSS…KASL. Basic residues-rich tracts occupy residues 276–290, 366–379, and 396–421; these read SQRK…HRLL, KKKK…KKGL, and PHHH…HTSS. In terms of domain architecture, EH spans 469–559; that stretch reads ANEDDESHLQ…RVWNSVDGYV (91 aa).

This sequence belongs to the IRS4 family. In terms of assembly, interacts with INP51.

Functionally, with IRS4, acts as a positive regulator of INP51 activity and phosphatidylinositol 4,5-bisphosphate turnover. Negatively regulates signaling through the cell integrity pathway, including the MAP kinase SLT2. In Saccharomyces cerevisiae (strain ATCC 204508 / S288c) (Baker's yeast), this protein is Protein TAX4 (TAX4).